A 141-amino-acid chain; its full sequence is Cytochrome c-type biogenesis protein CcmE (141 aa).

The Cytoplasmic segment spans residues 1–7 (MQRKHKR). A helical; Signal-anchor for type II membrane protein transmembrane segment spans residues 8–28 (ILFVAVSFIALGCVSAFVLFE). The Periplasmic portion of the chain corresponds to 29 to 141 (LSKSISFFCT…SSDAAVIGSS (113 aa)). 2 residues coordinate heme: His-121 and Tyr-125.

The protein belongs to the CcmE/CycJ family.

It is found in the cell inner membrane. Heme chaperone required for the biogenesis of c-type cytochromes. Transiently binds heme delivered by CcmC and transfers the heme to apo-cytochromes in a process facilitated by CcmF and CcmH. This is Cytochrome c-type biogenesis protein CcmE from Anaplasma phagocytophilum (strain HZ).